Reading from the N-terminus, the 490-residue chain is AP-5 complex subunit mu-1 (490 aa).

Residues 206-476 (KAQISISITE…LISSDYYIWN (271 aa)) enclose the MHD domain.

The protein belongs to the adaptor complexes medium subunit family. Probably part of the adaptor protein complex 5 (AP-5) a tetramer composed of AP5B1, AP5M1, AP5S1 and AP5Z1. As to expression, widely expressed, including in small intestine and testis. In small intestine, highly expressed in cytoplasm of villi epithelial cells and internal glands. In testis, selectively expressed in maturing sperm cells (at protein level).

Its subcellular location is the cytoplasm. The protein resides in the cytosol. It localises to the late endosome membrane. The protein localises to the lysosome membrane. In terms of biological role, as part of AP-5, a probable fifth adaptor protein complex it may be involved in endosomal transport. This is AP-5 complex subunit mu-1 (Ap5m1) from Mus musculus (Mouse).